Consider the following 235-residue polypeptide: Large ribosomal subunit protein uL1 (235 aa).

This sequence belongs to the universal ribosomal protein uL1 family. Part of the 50S ribosomal subunit.

Functionally, binds directly to 23S rRNA. The L1 stalk is quite mobile in the ribosome, and is involved in E site tRNA release. In terms of biological role, protein L1 is also a translational repressor protein, it controls the translation of the L11 operon by binding to its mRNA. The sequence is that of Large ribosomal subunit protein uL1 from Renibacterium salmoninarum (strain ATCC 33209 / DSM 20767 / JCM 11484 / NBRC 15589 / NCIMB 2235).